The following is a 530-amino-acid chain: Bifunctional purine biosynthesis protein PurH (530 aa).

The MGS-like domain maps to 1–148 (MENSRPIKRA…KNHKDVGIVV (148 aa)).

The protein belongs to the PurH family.

It carries out the reaction (6R)-10-formyltetrahydrofolate + 5-amino-1-(5-phospho-beta-D-ribosyl)imidazole-4-carboxamide = 5-formamido-1-(5-phospho-D-ribosyl)imidazole-4-carboxamide + (6S)-5,6,7,8-tetrahydrofolate. The enzyme catalyses IMP + H2O = 5-formamido-1-(5-phospho-D-ribosyl)imidazole-4-carboxamide. It functions in the pathway purine metabolism; IMP biosynthesis via de novo pathway; 5-formamido-1-(5-phospho-D-ribosyl)imidazole-4-carboxamide from 5-amino-1-(5-phospho-D-ribosyl)imidazole-4-carboxamide (10-formyl THF route): step 1/1. Its pathway is purine metabolism; IMP biosynthesis via de novo pathway; IMP from 5-formamido-1-(5-phospho-D-ribosyl)imidazole-4-carboxamide: step 1/1. This is Bifunctional purine biosynthesis protein PurH from Psychromonas ingrahamii (strain DSM 17664 / CCUG 51855 / 37).